Reading from the N-terminus, the 121-residue chain is Ribosome-binding factor A (121 aa).

It belongs to the RbfA family. Monomer. Binds 30S ribosomal subunits, but not 50S ribosomal subunits or 70S ribosomes.

The protein resides in the cytoplasm. Functionally, one of several proteins that assist in the late maturation steps of the functional core of the 30S ribosomal subunit. Associates with free 30S ribosomal subunits (but not with 30S subunits that are part of 70S ribosomes or polysomes). Required for efficient processing of 16S rRNA. May interact with the 5'-terminal helix region of 16S rRNA. This is Ribosome-binding factor A from Clostridium kluyveri (strain NBRC 12016).